The sequence spans 184 residues: ATP synthase subunit b, chloroplastic (184 aa).

Residues 27–49 (LATNPINLSVVLGVLIFFGKGVL) form a helical membrane-spanning segment.

It belongs to the ATPase B chain family. As to quaternary structure, F-type ATPases have 2 components, F(1) - the catalytic core - and F(0) - the membrane proton channel. F(1) has five subunits: alpha(3), beta(3), gamma(1), delta(1), epsilon(1). F(0) has four main subunits: a(1), b(1), b'(1) and c(10-14). The alpha and beta chains form an alternating ring which encloses part of the gamma chain. F(1) is attached to F(0) by a central stalk formed by the gamma and epsilon chains, while a peripheral stalk is formed by the delta, b and b' chains.

Its subcellular location is the plastid. The protein localises to the chloroplast thylakoid membrane. F(1)F(0) ATP synthase produces ATP from ADP in the presence of a proton or sodium gradient. F-type ATPases consist of two structural domains, F(1) containing the extramembraneous catalytic core and F(0) containing the membrane proton channel, linked together by a central stalk and a peripheral stalk. During catalysis, ATP synthesis in the catalytic domain of F(1) is coupled via a rotary mechanism of the central stalk subunits to proton translocation. Functionally, component of the F(0) channel, it forms part of the peripheral stalk, linking F(1) to F(0). The polypeptide is ATP synthase subunit b, chloroplastic (Oenothera elata subsp. hookeri (Hooker's evening primrose)).